Here is a 153-residue protein sequence, read N- to C-terminus: Ergochrome gene cluster protein CPUR_05425 (153 aa).

It participates in pigment biosynthesis. Its function is as follows. Part of the ergochrome gene cluster responsible for the typical purple-black color of the ergot sclerotia. The ergochrome gene cluster produces several ergot pigments including the yellow ergochrome secalonic acid and its derivatives, as well as the red anthraquinones endocrocin and clavorubin. The pathway begins with the synthesis of atrochrysone thioester by the polyketide synthase (PKS) CPUR_05437. The atrochrysone carboxyl ACP thioesterase CPUR_05436 then breaks the thioester bond and releases the atrochrysone carboxylic acid from CPUR_05437. The atrochrysone carboxylic acid is then converted to atrochrysone which is further transformed into emodin anthrone. The next step is performed by the anthrone oxygenase CPUR_05434 that catalyzes the oxidation of emodinanthrone to emodin. Emodin is further modified to yield monodictyphenone via several steps involving CPUR_05427, CPUR_05428, CPUR_05429 and CPUR_05430. The short chain dehydrogenase/reductase CPUR_05418 then catalyzes the C-5 ketoreduction to give the xanthone skeleton of the monomeric units. Ergochromes formation requires further dimerization steps of different xanthone units, probably catalyzed by the cytochrome P450 monooxygenase CPUR_05419. CPUR_05425, CPUR_05426 and CPUR_05431 are unique to Claviceps, thus it is likely that they are involved in further modification of xanthone units or in their dimerization. The yellow ergochromes and the red anthraquinone pigments endocrocin and clavorubin are products from the same PKS derived precursors and the latter are likely shunt products in the pathway of xanthone biosynthesis. It is proposed that atrochrysone carboxylic acid released from the PKS CPUR_05437 can also be converted to endocrocin anthrone which is further oxidized into endocrocin by CPUR_05435. Endocrocin could be then modified to clavorubin, possibly by CPUR_05423 and CPUR_05431. Clavorubin is the principal anthraquinone metabolite produced by the cluster with a much higher yield compared to endocrocin. This Claviceps purpurea (strain 20.1) (Ergot fungus) protein is Ergochrome gene cluster protein CPUR_05425.